A 207-amino-acid polypeptide reads, in one-letter code: Probable molybdenum cofactor guanylyltransferase (207 aa).

GTP is bound by residues 9–11, Lys21, and Asp97; that span reads LAG. Residue Asp97 participates in Mg(2+) binding.

Belongs to the MobA family. Mg(2+) serves as cofactor.

The protein localises to the cytoplasm. It carries out the reaction Mo-molybdopterin + GTP + H(+) = Mo-molybdopterin guanine dinucleotide + diphosphate. In terms of biological role, transfers a GMP moiety from GTP to Mo-molybdopterin (Mo-MPT) cofactor (Moco or molybdenum cofactor) to form Mo-molybdopterin guanine dinucleotide (Mo-MGD) cofactor. The sequence is that of Probable molybdenum cofactor guanylyltransferase from Nostoc sp. (strain PCC 7120 / SAG 25.82 / UTEX 2576).